Reading from the N-terminus, the 470-residue chain is Cell division protein FtsP (470 aa).

The segment at residues 1 to 27 (MSFSRRQFLQASGIALCAGAIPLRANA) is a signal peptide (tat-type signal). Residues 222–287 (VEVSRGWVRL…RREILVDMTN (66 aa)) form the Plastocyanin-like domain.

It belongs to the FtsP family. Predicted to be exported by the Tat system. The position of the signal peptide cleavage has not been experimentally proven.

The protein resides in the periplasm. In terms of biological role, cell division protein that is required for growth during stress conditions. May be involved in protecting or stabilizing the divisomal assembly under conditions of stress. This is Cell division protein FtsP from Salmonella typhi.